The sequence spans 81 residues: Toxin-like peptide AaF1CA5 (81 aa).

The first 22 residues, 1 to 22 (MMKLMLFSIIVILFSLIGSIHG), serve as a signal peptide directing secretion. An LCN-type CS-alpha/beta domain is found at 25–81 (VPGNYPLDSSDDTYLCAPLGENPFCIKICRKHGVKYGLMLRLPCWCEYFGKIKNVKI). 2 disulfides stabilise this stretch: cysteine 49-cysteine 68 and cysteine 53-cysteine 70.

Belongs to the long (3 C-C) scorpion toxin superfamily. In terms of tissue distribution, expressed by the venom gland.

It localises to the secreted. In terms of biological role, probable neurotoxin that inhibits ion channels. The chain is Toxin-like peptide AaF1CA5 from Androctonus australis (Sahara scorpion).